A 491-amino-acid polypeptide reads, in one-letter code: Aspartyl/glutamyl-tRNA(Asn/Gln) amidotransferase subunit B (491 aa).

This sequence belongs to the GatB/GatE family. GatB subfamily. Heterotrimer of A, B and C subunits.

It catalyses the reaction L-glutamyl-tRNA(Gln) + L-glutamine + ATP + H2O = L-glutaminyl-tRNA(Gln) + L-glutamate + ADP + phosphate + H(+). The catalysed reaction is L-aspartyl-tRNA(Asn) + L-glutamine + ATP + H2O = L-asparaginyl-tRNA(Asn) + L-glutamate + ADP + phosphate + 2 H(+). In terms of biological role, allows the formation of correctly charged Asn-tRNA(Asn) or Gln-tRNA(Gln) through the transamidation of misacylated Asp-tRNA(Asn) or Glu-tRNA(Gln) in organisms which lack either or both of asparaginyl-tRNA or glutaminyl-tRNA synthetases. The reaction takes place in the presence of glutamine and ATP through an activated phospho-Asp-tRNA(Asn) or phospho-Glu-tRNA(Gln). The protein is Aspartyl/glutamyl-tRNA(Asn/Gln) amidotransferase subunit B of Paraburkholderia phymatum (strain DSM 17167 / CIP 108236 / LMG 21445 / STM815) (Burkholderia phymatum).